The primary structure comprises 301 residues: Sulfate adenylyltransferase subunit 2 (301 aa).

It belongs to the PAPS reductase family. CysD subfamily. In terms of assembly, heterodimer composed of CysD, the smaller subunit, and CysN.

It catalyses the reaction sulfate + ATP + H(+) = adenosine 5'-phosphosulfate + diphosphate. Its pathway is sulfur metabolism; hydrogen sulfide biosynthesis; sulfite from sulfate: step 1/3. In terms of biological role, with CysN forms the ATP sulfurylase (ATPS) that catalyzes the adenylation of sulfate producing adenosine 5'-phosphosulfate (APS) and diphosphate, the first enzymatic step in sulfur assimilation pathway. APS synthesis involves the formation of a high-energy phosphoric-sulfuric acid anhydride bond driven by GTP hydrolysis by CysN coupled to ATP hydrolysis by CysD. The chain is Sulfate adenylyltransferase subunit 2 from Geobacter metallireducens (strain ATCC 53774 / DSM 7210 / GS-15).